Consider the following 166-residue polypeptide: Small ribosomal subunit protein uS5 (166 aa).

The S5 DRBM domain occupies 11-74; it reads LDDNVVAINR…EAAKKNLITV (64 aa).

This sequence belongs to the universal ribosomal protein uS5 family. Part of the 30S ribosomal subunit. Contacts proteins S4 and S8.

Functionally, with S4 and S12 plays an important role in translational accuracy. In terms of biological role, located at the back of the 30S subunit body where it stabilizes the conformation of the head with respect to the body. This Lactiplantibacillus plantarum (strain ATCC BAA-793 / NCIMB 8826 / WCFS1) (Lactobacillus plantarum) protein is Small ribosomal subunit protein uS5.